The following is a 1092-amino-acid chain: Extended synaptotagmin-1 (1092 aa).

M1 carries the post-translational modification N-acetylmethionine. Residues 1 to 28 (MEHSPEEGASPEPSGQPPATDSTRDGGS) lie on the Cytoplasmic side of the membrane. Residues 1–36 (MEHSPEEGASPEPSGQPPATDSTRDGGSGVPPAGPG) form a disordered region. A helical membrane pass occupies residues 29–49 (GVPPAGPGAASEALAVLTSFG). At 50–52 (RRL) the chain is on the lumenal side. A helical transmembrane segment spans residues 53-73 (LVLVPVYLAGAAGLSVGFVLF). Over 74 to 1092 (GLALYLGWRR…LMDDRDKGGS (1019 aa)) the chain is Cytoplasmic. The SMP-LTD domain maps to 125–303 (DVEKAEWLNK…LPNRLLVPLV (179 aa)). C2 domains lie at 302–423 (LVPD…DNWY), 444–570 (DAEK…QLSS), 616–738 (DAPP…DEWL), and 769–886 (QVNS…ALSG). The residue at position 314 (S314) is a Phosphoserine; by CDK5. Residues K334, D335, D347, D394, D396, D398, D400, and D401 each coordinate Ca(2+). The segment at 604–628 (WDRESLETGSSVDAPPRPYHTTPNS) is disordered. Position 804 is an N6-acetyllysine (K804). Residue S807 is modified to Phosphoserine. Positions 909-937 (HSHSYSHSHSSSSLNDEPEALGGPTHPAS) are disordered. The span at 911 to 921 (HSYSHSHSSSS) shows a compositional bias: low complexity. S937 and S951 each carry phosphoserine. Residues 959–1081 (PLGQVKLTVW…DLSQGAAQWY (123 aa)) form the C2 5 domain. Y997 carries the post-translational modification Phosphotyrosine. Positions 1006-1013 (KNRSTKRK) are required for phosphatidylinositol 4,5-bisphosphate-dependent location at the cell membrane.

It belongs to the extended synaptotagmin family. Interacts with ESYT2 and ESYT3. Interacts with ADGRD1; inhibiting the G-protein-coupled receptor activity of ADGRD1. Interaction with ADGRD1 is abolished when cytosolic calcium increases, relieving ADGRD1 G-protein-coupled receptor activity. Interacts (phosphorylated form) with SLC2A4. In terms of processing, phosphorylated on Ser residues in insulin-treated adipocytes (in vitro); this promotes interaction with SLC2A4.

It is found in the endoplasmic reticulum membrane. It localises to the cell membrane. Functionally, binds calcium (via the C2 domains) and translocates to sites of contact between the endoplasmic reticulum and the cell membrane in response to increased cytosolic calcium levels. Helps tether the endoplasmic reticulum to the cell membrane and promotes the formation of appositions between the endoplasmic reticulum and the cell membrane. Acts as an inhibitor of ADGRD1 G-protein-coupled receptor activity in absence of cytosolic calcium. Binds glycerophospholipids in a barrel-like domain and may play a role in cellular lipid transport. This chain is Extended synaptotagmin-1 (Esyt1), found in Mus musculus (Mouse).